A 380-amino-acid polypeptide reads, in one-letter code: Bifunctional dihydropteroate synthase/dihydropteroate reductase (380 aa).

Residues 1–104 form a dihydropteroate reductase region; it reads MIVKRLNPDA…SQPFGLKHLA (104 aa). The tract at residues 105–380 is dihydropteroate synthase; the sequence is QELKSHLKAP…KVFKSLEETD (276 aa). In terms of domain architecture, Pterin-binding spans 119–371; the sequence is PQIMAVLNLT…DIDEHIDLIK (253 aa). Asn-126 serves as a coordination point for Mg(2+). (7,8-dihydropterin-6-yl)methyl diphosphate contacts are provided by residues Asp-202, Asn-221, Asp-289, Lys-325, and 359–361; that span reads RVH.

This sequence in the C-terminal section; belongs to the DHPS family. FAD is required as a cofactor. FMN serves as cofactor. It depends on Mg(2+) as a cofactor.

The catalysed reaction is (7,8-dihydropterin-6-yl)methyl diphosphate + 4-aminobenzoate = 7,8-dihydropteroate + diphosphate. It catalyses the reaction (6S)-5,6,7,8-tetrahydropteroate + NAD(+) = 7,8-dihydropteroate + NADH + H(+). The protein operates within cofactor biosynthesis; tetrahydrofolate biosynthesis; 7,8-dihydrofolate from 2-amino-4-hydroxy-6-hydroxymethyl-7,8-dihydropteridine diphosphate and 4-aminobenzoate: step 1/2. Functionally, bifunctional enzyme that catalyzes the formation of dihydropteroate, the immediate precursor of folic acid and the reduction of dihydropteroate to tetrahydropteroate. This is Bifunctional dihydropteroate synthase/dihydropteroate reductase from Helicobacter pylori (strain ATCC 700392 / 26695) (Campylobacter pylori).